The primary structure comprises 56 residues: Ovomucoid (56 aa).

Positions 6–56 (VDCSEYPKPACTLEHRPLCGSDNKTYGNKCNFCNAVVESNGTLTLSHFGKC) constitute a Kazal-like domain. 3 disulfide bridges follow: Cys-8–Cys-38, Cys-16–Cys-35, and Cys-24–Cys-56. The N-linked (GlcNAc...) asparagine glycan is linked to Asn-45.

Its subcellular location is the secreted. This Pavo cristatus (Indian peafowl) protein is Ovomucoid.